The chain runs to 480 residues: F-box only protein 3 (480 aa).

Residues 10–56 form the F-box domain; sequence LLTLESLPTDPLLLILSFVDYRDLINCCYVSRRLSQLSTHDPLWRRH. Residues 278 to 408 form the ApaG domain; that stretch reads VATTGDITVS…FHMACPTFRV (131 aa). Residues 419-458 are compositionally biased toward acidic residues; sequence EYEEMEEEAEEEEEEENDDSADMDESDESDADENESDEGE. Residues 419–463 form a disordered region; that stretch reads EYEEMEEEAEEEEEEENDDSADMDESDESDADENESDEGEGEARR.

As to quaternary structure, part of a SCF (SKP1-cullin-F-box) protein ligase complex SCF(FBXO3) consisting of FBXO3, SKP1, CUL1 and RBX1. Interacts with PML, interaction is direct and takes place either alone or within the SCF complex.

It is found in the nucleus. The protein operates within protein modification; protein ubiquitination. Substrate recognition component of the SCF (SKP1-CUL1-F-box protein)-type E3 ubiquitin ligase complex, SCF(FBXO3), which mediates the ubiquitination and subsequent proteasomal degradation of target proteins. Mediates the ubiquitination of HIPK2 and probably that of EP300, leading to rapid degradation by the proteasome. In the presence of PML, HIPK2 ubiquitination still occurs, but degradation is prevented. PML, HIPK2 and FBXO3 may act synergically to activate p53/TP53-dependent transactivation. The SCF(FBXO3) also acts as a regulator of inflammation by mediating ubiquitination and degradation of FBXL2: specifically recognizes FBXL2 phosphorylated at 'Thr-404' and promotes its ubiquitination. The chain is F-box only protein 3 (Fbxo3) from Mus musculus (Mouse).